A 312-amino-acid polypeptide reads, in one-letter code: Translation initiation factor IF3-2, chloroplastic (312 aa).

Residues 1–55 constitute a chloroplast transit peptide; sequence MAGITSSTVGFNAVFTGITKTVSSHSLFSVDSKLCSLRLSKTELSFTNLTPSPRR. The span at 253 to 263 shows a compositional bias: basic and acidic residues; the sequence is EMIRKPQEPPT. The interval 253 to 312 is disordered; that stretch reads EMIRKPQEPPTRKKKKTAENEASASAAEITAEPEPEPEPEPEPEPEPEPEPEPEPLQIDS. A compositionally biased stretch (low complexity) spans 272–282; that stretch reads NEASASAAEIT. Positions 283–305 are enriched in acidic residues; the sequence is AEPEPEPEPEPEPEPEPEPEPEP.

The protein belongs to the IF-3 family. In terms of assembly, monomer. In terms of tissue distribution, highly expressed in young, newly emerged leaves.

It is found in the plastid. It localises to the chloroplast. Its function is as follows. Chloroplast translation initiation factor that is essential for the coordination of leaf and chloroplast development. IF-3 binds to the 30S ribosomal subunit and shifts the equilibrium between 70S ribosomes and their 50S and 30S subunits in favor of the free subunits, thus enhancing the availability of 30S subunits on which protein synthesis initiation begins. The protein is Translation initiation factor IF3-2, chloroplastic of Arabidopsis thaliana (Mouse-ear cress).